The chain runs to 514 residues: ATP synthase subunit alpha (514 aa).

169–176 contacts ATP; the sequence is GDRQTGKT.

Belongs to the ATPase alpha/beta chains family. F-type ATPases have 2 components, CF(1) - the catalytic core - and CF(0) - the membrane proton channel. CF(1) has five subunits: alpha(3), beta(3), gamma(1), delta(1), epsilon(1). CF(0) has three main subunits: a(1), b(2) and c(9-12). The alpha and beta chains form an alternating ring which encloses part of the gamma chain. CF(1) is attached to CF(0) by a central stalk formed by the gamma and epsilon chains, while a peripheral stalk is formed by the delta and b chains.

It is found in the cell membrane. It catalyses the reaction ATP + H2O + 4 H(+)(in) = ADP + phosphate + 5 H(+)(out). Functionally, produces ATP from ADP in the presence of a proton gradient across the membrane. The alpha chain is a regulatory subunit. The sequence is that of ATP synthase subunit alpha from Buchnera aphidicola subsp. Baizongia pistaciae (strain Bp).